The following is a 494-amino-acid chain: Endoglucanase 22 (494 aa).

The N-terminal stretch at 1 to 21 (MKPLVCSFIVILLILLPTTIS) is a signal peptide. The active-site Nucleophile is Asp76. His413 is an active-site residue. Asn468 carries an N-linked (GlcNAc...) asparagine glycan. Residue Glu473 is part of the active site.

This sequence belongs to the glycosyl hydrolase 9 (cellulase E) family.

It is found in the secreted. It catalyses the reaction Endohydrolysis of (1-&gt;4)-beta-D-glucosidic linkages in cellulose, lichenin and cereal beta-D-glucans.. The sequence is that of Endoglucanase 22 (GH9B16) from Arabidopsis thaliana (Mouse-ear cress).